The sequence spans 273 residues: Anthranilate synthase beta subunit 2, chloroplastic (273 aa).

A chloroplast-targeting transit peptide spans 1-47; it reads MATAARLLPKIQSPASPAVAEARRRRPSSLRLGVTSGPARTLKQKLV. The tract at residues 15–35 is disordered; it reads ASPAVAEARRRRPSSLRLGVT. The Glutamine amidotransferase type-1 domain occupies 70-269; it reads PIIVIDNYDS…IKIIEGYEAL (200 aa). Position 121–123 (121–123) interacts with L-glutamine; it reads GPG. Cysteine 148 serves as the catalytic Nucleophile. Residues glutamine 152 and 202 to 203 each bind L-glutamine; that span reads SL. Active-site residues include histidine 243 and glutamate 245.

Heterotetramer consisting of two non-identical subunits: a beta subunit and a large alpha subunit. In terms of tissue distribution, expressed in roots and leaves.

Its subcellular location is the plastid. It localises to the chloroplast. It carries out the reaction chorismate + L-glutamine = anthranilate + pyruvate + L-glutamate + H(+). It participates in amino-acid biosynthesis; L-tryptophan biosynthesis; L-tryptophan from chorismate: step 1/5. Functionally, part of a heterotetrameric complex that catalyzes the two-step biosynthesis of anthranilate, an intermediate in the biosynthesis of L-tryptophan. In the first step, the glutamine-binding beta subunit of anthranilate synthase (AS) provides the glutamine amidotransferase activity which generates ammonia as a substrate that, along with chorismate, is used in the second step, catalyzed by the large alpha subunit of AS to produce anthranilate. In Oryza sativa subsp. japonica (Rice), this protein is Anthranilate synthase beta subunit 2, chloroplastic.